A 229-amino-acid chain; its full sequence is 7-cyano-7-deazaguanine synthase (229 aa).

8-18 lines the ATP pocket; that stretch reads FSGGQDSTTCL. The Zn(2+) site is built by Cys186, Cys195, Cys198, and Cys201.

The protein belongs to the QueC family. It depends on Zn(2+) as a cofactor.

The enzyme catalyses 7-carboxy-7-deazaguanine + NH4(+) + ATP = 7-cyano-7-deazaguanine + ADP + phosphate + H2O + H(+). The protein operates within purine metabolism; 7-cyano-7-deazaguanine biosynthesis. In terms of biological role, catalyzes the ATP-dependent conversion of 7-carboxy-7-deazaguanine (CDG) to 7-cyano-7-deazaguanine (preQ(0)). This Edwardsiella ictaluri (strain 93-146) protein is 7-cyano-7-deazaguanine synthase.